Reading from the N-terminus, the 78-residue chain is MKFIVLLGALLALLVAVSADRIAREAPEMESVDEAVLTRQAREAEDPAVVEDAIRKFVRWLVQKYGINIHDLIDHFKH.

The first 19 residues, 1–19 (MKFIVLLGALLALLVAVSA), serve as a signal peptide directing secretion. A propeptide spanning residues 20–42 (DRIAREAPEMESVDEAVLTRQAR) is cleaved from the precursor.

In terms of tissue distribution, expressed by the venom gland.

The protein localises to the secreted. This Pimpla hypochondriaca (Parasitoid wasp) protein is Small venom protein 2.